Reading from the N-terminus, the 387-residue chain is Cytochrome b (387 aa).

4 consecutive transmembrane segments (helical) span residues 32 to 52 (FGSLLALCLGIQIVTGVTLAM), 76 to 98 (WLVRYLHSNTASAFFFLVYLHIG), 113 to 133 (TWAIGTVILIVMMATAFLGYV), and 179 to 199 (FFALHFLLPFVLAALALMHLI). Residues His82 and His96 each contribute to the heme b site. Positions 183 and 197 each coordinate heme b. An a ubiquinone-binding site is contributed by His202. 4 helical membrane passes run 226 to 246 (FIFKDLITIFIFFIVLSIFVF), 290 to 310 (LLGVIAMFAAILALMVMPITD), 322 to 342 (LSKVVFYIFVANFLILMQIGA), and 349 to 369 (FIEFGQISTIIYFAYFFVIVP).

Belongs to the cytochrome b family. Fungal cytochrome b-c1 complex contains 10 subunits; 3 respiratory subunits, 2 core proteins and 5 low-molecular weight proteins. Cytochrome b-c1 complex is a homodimer. The cofactor is heme b.

The protein resides in the mitochondrion inner membrane. Its function is as follows. Component of the ubiquinol-cytochrome c reductase complex (complex III or cytochrome b-c1 complex) that is part of the mitochondrial respiratory chain. The b-c1 complex mediates electron transfer from ubiquinol to cytochrome c. Contributes to the generation of a proton gradient across the mitochondrial membrane that is then used for ATP synthesis. This chain is Cytochrome b (cob), found in Emericella nidulans (Aspergillus nidulans).